The chain runs to 311 residues: Coproporphyrin III ferrochelatase 1 (311 aa).

Fe-coproporphyrin III contacts are provided by residues Y12, R29, 45 to 46 (RY), S53, and Y124. Fe(2+)-binding residues include H182 and E263.

The protein belongs to the ferrochelatase family.

It localises to the cytoplasm. The enzyme catalyses Fe-coproporphyrin III + 2 H(+) = coproporphyrin III + Fe(2+). Its pathway is porphyrin-containing compound metabolism; protoheme biosynthesis. Its function is as follows. Involved in coproporphyrin-dependent heme b biosynthesis. Catalyzes the insertion of ferrous iron into coproporphyrin III to form Fe-coproporphyrin III. This chain is Coproporphyrin III ferrochelatase 1, found in Bacillus thuringiensis subsp. konkukian (strain 97-27).